Here is a 158-residue protein sequence, read N- to C-terminus: Disease resistance response protein DRRG49-C (158 aa).

It belongs to the BetVI family.

The chain is Disease resistance response protein DRRG49-C from Pisum sativum (Garden pea).